An 83-amino-acid polypeptide reads, in one-letter code: Large ribosomal subunit protein eL37 (83 aa).

Cysteine 19, cysteine 22, cysteine 34, and cysteine 37 together coordinate Zn(2+). The C4-type zinc finger occupies 19-37 (CRRCGRNSYHVQWERCAAC).

It belongs to the eukaryotic ribosomal protein eL37 family. The cofactor is Zn(2+).

Functionally, binds to the 23S rRNA. The polypeptide is Large ribosomal subunit protein eL37 (RPL37) (Leishmania donovani).